The chain runs to 228 residues: Geranylgeranylglyceryl phosphate synthase (228 aa).

Position 13 (Lys13) interacts with sn-glycerol 1-phosphate. Positions 15 and 41 each coordinate Mg(2+). Residues 159 to 164 (YIEYSG), Gly189, and 209 to 210 (GN) each bind sn-glycerol 1-phosphate.

Belongs to the GGGP/HepGP synthase family. Group I subfamily. Requires Mg(2+) as cofactor.

The protein localises to the cytoplasm. The catalysed reaction is sn-glycerol 1-phosphate + (2E,6E,10E)-geranylgeranyl diphosphate = sn-3-O-(geranylgeranyl)glycerol 1-phosphate + diphosphate. Its pathway is membrane lipid metabolism; glycerophospholipid metabolism. In terms of biological role, prenyltransferase that catalyzes the transfer of the geranylgeranyl moiety of geranylgeranyl diphosphate (GGPP) to the C3 hydroxyl of sn-glycerol-1-phosphate (G1P). This reaction is the first ether-bond-formation step in the biosynthesis of archaeal membrane lipids. This is Geranylgeranylglyceryl phosphate synthase from Methanospirillum hungatei JF-1 (strain ATCC 27890 / DSM 864 / NBRC 100397 / JF-1).